The following is a 272-amino-acid chain: Short-chain dehydrogenase reductase ATA1 (272 aa).

NADP(+) is bound at residue 14–38 (IITGGARGIGAATARLFTENGAYVI). Substrate is bound at residue Ser-143. The active-site Proton acceptor is Tyr-156. Lys-160 provides a ligand contact to NADP(+).

The protein belongs to the short-chain dehydrogenases/reductases (SDR) family. As to expression, expressed specifically in tapetal cells.

May play a role in tapetum development. This chain is Short-chain dehydrogenase reductase ATA1, found in Arabidopsis thaliana (Mouse-ear cress).